Reading from the N-terminus, the 346-residue chain is D-alanine--D-alanine ligase (346 aa).

An ATP-grasp domain is found at 133 to 327 (KLYAKSVGVK…ALADQISLEK (195 aa)). 159 to 211 (LSFPCIIKPARLGSSIGISIVKDEKDLEYAKDVGFEFDNDLVVEEFKNNIKEY) serves as a coordination point for ATP. Mg(2+)-binding residues include aspartate 284, glutamate 296, and asparagine 298.

This sequence belongs to the D-alanine--D-alanine ligase family. Mg(2+) serves as cofactor. It depends on Mn(2+) as a cofactor.

It localises to the cytoplasm. The enzyme catalyses 2 D-alanine + ATP = D-alanyl-D-alanine + ADP + phosphate + H(+). The protein operates within cell wall biogenesis; peptidoglycan biosynthesis. Its function is as follows. Cell wall formation. The sequence is that of D-alanine--D-alanine ligase from Campylobacter jejuni subsp. jejuni serotype O:6 (strain 81116 / NCTC 11828).